The sequence spans 1592 residues: Serine/threonine-protein kinase mrck-1 (1592 aa).

Residues 1–954 (MAEPPPDDSA…IFSPVSISAM (954 aa)) form an involved in homo-dimerization region. The 269-residue stretch at 83 to 351 (FEVLKVIGKG…LSDFQLHPFF (269 aa)) folds into the Protein kinase domain. Residues 89-97 (IGKGAFGEV) and lysine 112 contribute to the ATP site. Aspartate 207 acts as the Proton acceptor in catalysis. An AGC-kinase C-terminal domain is found at 352–426 (EGIDWNTIRD…THGSLLSDAR (75 aa)). Serine 415 is subject to Phosphoserine. Tyrosine 416 carries the post-translational modification Phosphotyrosine. 2 coiled-coil regions span residues 444–782 (ELME…KNNS) and 811–871 (LDLQ…IENS). Over residues 782–796 (SPLTTSNYIQNTPSG) the composition is skewed to polar residues. The disordered stretch occupies residues 782-801 (SPLTTSNYIQNTPSGWGSRR). An involved in binding to membranes, with a preference for di-phosphorylated phosphoinositides (PIPs) region spans residues 955–1534 (ERGHNFERMK…FRTIGKDDRS (580 aa)). The Phorbol-ester/DAG-type zinc finger occupies 957-1007 (GHNFERMKIKTPTKCGHCTSILIGLDRQGLFCQSCQYACHVSCAERVSQSC). Positions 958, 971, 974, 988, 991, 996, 999, and 1007 each coordinate Zn(2+). Positions 1026–1154 (GTAYEGLVKT…WVVALSELKT (129 aa)) constitute a PH domain. Residues 1181-1479 (IRVAQCCAII…KPLSGDGILS (299 aa)) form the CNH domain. Positions 1544–1557 (ISTPSDFMHIVHMG) constitute a CRIB domain. Residues 1544–1557 (ISTPSDFMHIVHMG) are involved in interaction with cdc-42 (GTP-bound). Deletion prevents rescue of a null mutant; furthermore deleted form of mrck-1 is no longer recruited to the cell cortex and instead appears to be completely cytoplasmic.

It belongs to the protein kinase superfamily. AGC Ser/Thr protein kinase family. DMPK subfamily. In terms of assembly, homodimer, via N-terminal domains. Interacts (via the CRIB domain) with cdc-42 (GTP-bound), but with a lower affinity for cdc-42 bound to GDP; the interaction is direct and may play a role in the recruitment of mrck-1 to the apical membrane. Requires Mg(2+) as cofactor. Expressed in embryonic and L4 larval seam cells and in embryonic dorsal and ventral epidermal cells. Also expressed in the pharynx throughout development and in sublateral nerve cords in the L4 larva.

It localises to the cytoplasm. Its subcellular location is the cell cortex. The enzyme catalyses L-seryl-[protein] + ATP = O-phospho-L-seryl-[protein] + ADP + H(+). It catalyses the reaction L-threonyl-[protein] + ATP = O-phospho-L-threonyl-[protein] + ADP + H(+). Functionally, serine/threonine-protein kinase. Involved in regulating endoderm precursor cell movements during early gastrulation; activates apical myosin and thereby increases actomyosin contractility and tension in the apical cell cortex, probably as a result of recruitment of mrck-1 to the cortex by a combination of interaction with active cdc-42 and membrane binding. May phosphorylate and inactivate the phosphatase mel-11, and thereby contribute to the regulation of myosin II contractility during embryonic elongation. Involved in controlling canal length and Golgi/ER integrity during excretory canal elongation. This Caenorhabditis elegans protein is Serine/threonine-protein kinase mrck-1.